Consider the following 284-residue polypeptide: Acetyl-coenzyme A carboxylase carboxyl transferase subunit beta (284 aa).

The CoA carboxyltransferase N-terminal domain occupies 31–284 (FWTYCKGCDS…LYQILAMHKK (254 aa)). Residues Cys35, Cys38, Cys54, and Cys57 each coordinate Zn(2+). Residues 35 to 57 (CKGCDSHVFRKDIEENSFVCPKC) form a C4-type zinc finger.

Belongs to the AccD/PCCB family. As to quaternary structure, acetyl-CoA carboxylase is a heterohexamer composed of biotin carboxyl carrier protein (AccB), biotin carboxylase (AccC) and two subunits each of ACCase subunit alpha (AccA) and ACCase subunit beta (AccD). Zn(2+) serves as cofactor.

The protein resides in the cytoplasm. The catalysed reaction is N(6)-carboxybiotinyl-L-lysyl-[protein] + acetyl-CoA = N(6)-biotinyl-L-lysyl-[protein] + malonyl-CoA. Its pathway is lipid metabolism; malonyl-CoA biosynthesis; malonyl-CoA from acetyl-CoA: step 1/1. Its function is as follows. Component of the acetyl coenzyme A carboxylase (ACC) complex. Biotin carboxylase (BC) catalyzes the carboxylation of biotin on its carrier protein (BCCP) and then the CO(2) group is transferred by the transcarboxylase to acetyl-CoA to form malonyl-CoA. This is Acetyl-coenzyme A carboxylase carboxyl transferase subunit beta from Clostridioides difficile (strain 630) (Peptoclostridium difficile).